The following is a 157-amino-acid chain: Probable calcium-binding protein CML15 (157 aa).

EF-hand domains are found at residues 3 to 38, 39 to 74, 78 to 113, and 114 to 149; these read DQIRQLKDIFDRFDMDADGSLTILELAALLRSLGLK, PSGDQIHVLLASMDSNGNGFVEFDELVGTILPDLNE, INSEQLLEIFKSFDRDGNGFISAAELAGAMAKMGQP, and LTYKELTEMIKEADTNGDGVISFGEFASIMAKSAVD. Ca(2+)-binding residues include aspartate 16, aspartate 18, aspartate 20, serine 22, glutamate 27, aspartate 52, asparagine 54, asparagine 56, glutamate 63, aspartate 91, aspartate 93, asparagine 95, glutamate 102, aspartate 127, asparagine 129, aspartate 131, and glutamate 138.

In terms of biological role, potential calcium sensor. This is Probable calcium-binding protein CML15 (CML15) from Arabidopsis thaliana (Mouse-ear cress).